The chain runs to 421 residues: Myb-related protein Pp2 (421 aa).

HTH myb-type domains follow at residues 9–61 (KVGL…TNYL) and 62–116 (RPDL…KKRL). DNA-binding regions (H-T-H motif) lie at residues 37–61 (WRAI…TNYL) and 89–112 (WSRI…NTRL). The disordered stretch occupies residues 119 to 240 (QGLDPNTHLP…VTTKSHEDHR (122 aa)). A compositionally biased stretch (acidic residues) spans 136–147 (DTEDDTDDEGGD).

It localises to the nucleus. Possible transcription activator. In Physcomitrium patens (Spreading-leaved earth moss), this protein is Myb-related protein Pp2 (PP2).